The chain runs to 331 residues: Smad-related protein daf-14 (331 aa).

Residues 134–331 (WCTIFYYELT…NERPEIGSRS (198 aa)) form the MH2 domain. Positions 168–187 (ECRMSLTSQPSSRNSKSSQI) are disordered. Residues 175–185 (SQPSSRNSKSS) show a composition bias toward low complexity.

In terms of assembly, interacts with R-SMAD daf-8 and co-SMAD daf-3. Interacts with daf-3 in a daf-8 dependent manner.

Probably an atypical receptor-regulated SMAD (R-SMAD) that is an intracellular signal transducer and transcriptional modulator activated by TGF-beta-like daf-7 signaling. Plays a role in TGF-beta-like daf-7 signaling in regulating entry into a developmentally arrested larval state known as dauer, in response to harsh environmental conditions; partially redundant with R-SMAD daf-8. The chain is Smad-related protein daf-14 from Caenorhabditis elegans.